A 147-amino-acid polypeptide reads, in one-letter code: Riboflavin kinase (147 aa).

15–20 (GLGEGR) is a binding site for CDP. Mg(2+)-binding residues include T44 and N46. Residues T97 and E104 each coordinate FMN. Residue 109 to 112 (TELR) participates in CDP binding.

It belongs to the archaeal riboflavin kinase family. Mg(2+) is required as a cofactor.

The catalysed reaction is riboflavin + CTP = CDP + FMN + H(+). It participates in cofactor biosynthesis; FMN biosynthesis; FMN from riboflavin (CTP route): step 1/1. In terms of biological role, catalyzes the CTP-dependent phosphorylation of riboflavin (vitamin B2) to form flavin mononucleotide (FMN). In Methanopyrus kandleri (strain AV19 / DSM 6324 / JCM 9639 / NBRC 100938), this protein is Riboflavin kinase.